We begin with the raw amino-acid sequence, 263 residues long: Tryptophan synthase alpha chain (263 aa).

Catalysis depends on proton acceptor residues E49 and D60.

Belongs to the TrpA family. Tetramer of two alpha and two beta chains.

It carries out the reaction (1S,2R)-1-C-(indol-3-yl)glycerol 3-phosphate + L-serine = D-glyceraldehyde 3-phosphate + L-tryptophan + H2O. It functions in the pathway amino-acid biosynthesis; L-tryptophan biosynthesis; L-tryptophan from chorismate: step 5/5. The alpha subunit is responsible for the aldol cleavage of indoleglycerol phosphate to indole and glyceraldehyde 3-phosphate. The protein is Tryptophan synthase alpha chain of Jannaschia sp. (strain CCS1).